Consider the following 394-residue polypeptide: GDP-mannose transporter (394 aa).

Residues 1–56 (MSNKKNEDIEMRAVEGANDFGGEKDPFLGRNSPVLRPRGREPTASAYFGKLDNSPG) lie on the Cytoplasmic side of the membrane. The helical transmembrane segment at 57–77 (ASIIAYCLSSISMTVVNKYVV) threads the bilayer. Topologically, residues 78-81 (SGES) are lumenal. A helical membrane pass occupies residues 82-102 (WNLNFFYLGVQSLVCTIAILL). The Cytoplasmic portion of the chain corresponds to 103–122 (SRQTGLIKNLAPFDSNKAKR). A helical membrane pass occupies residues 123-145 (WFPVSLLLVSMIYTGANALQYLS). Residues 146–150 (VPVYT) lie on the Lumenal side of the membrane. The helical transmembrane segment at 151 to 168 (IFKNLTIIVIAYGEVLWF) threads the bilayer. At 169–174 (GGSVTP) the chain is on the cytoplasmic side. Residues 175–199 (LMLLSFGLMVLSSVVAAWADIQAAI) form a helical membrane-spanning segment. The Lumenal portion of the chain corresponds to 200–207 (DGVGHSAE). Residues 208–228 (TSAALATLNAGYAWMGLNVVC) traverse the membrane as a helical segment. Residues 229-249 (TSSYLLGMRKVIKKMNFKDYD) are Cytoplasmic-facing. Residues 250-270 (SMFYNNLLTIPVLVVCSLLVE) form a helical membrane-spanning segment. Topologically, residues 271–288 (DWSSENLAKNFPIETRNK) are lumenal. The chain crosses the membrane as a helical span at residues 289-309 (LMVGMIYSGLAAIFISYCSAW). The Cytoplasmic portion of the chain corresponds to 310–317 (CIRVTSST). The chain crosses the membrane as a helical span at residues 318–338 (TYSMVGALNKLPIAISGLIFF). Residues 339–341 (DAP) are Lumenal-facing. A helical membrane pass occupies residues 342-362 (ITFGSITAIAVGFVSGLVFAW). The Cytoplasmic segment spans residues 363–394 (AKVRQKAQEAGLLPTTKPTMSASAQSNRDANS).

Belongs to the TPT transporter family. SLC35D subfamily. Homooligomer.

The protein localises to the golgi apparatus membrane. Its subcellular location is the cytoplasmic vesicle membrane. The protein resides in the endoplasmic reticulum membrane. Functionally, involved in the import of GDP-mannose from the cytoplasm into the Golgi lumen. This is GDP-mannose transporter (VRG4) from Chaetomium globosum (strain ATCC 6205 / CBS 148.51 / DSM 1962 / NBRC 6347 / NRRL 1970) (Soil fungus).